The primary structure comprises 385 residues: Acetate kinase (385 aa).

Asn9 contributes to the Mg(2+) binding site. Residue Lys16 participates in ATP binding. Arg87 contributes to the substrate binding site. Asp144 (proton donor/acceptor) is an active-site residue. Residues 202-206 (HLGSG) and 277-279 (DMR) contribute to the ATP site. Position 373 (Glu373) interacts with Mg(2+).

It belongs to the acetokinase family. Homodimer. Mg(2+) serves as cofactor. It depends on Mn(2+) as a cofactor.

Its subcellular location is the cytoplasm. The enzyme catalyses acetate + ATP = acetyl phosphate + ADP. It participates in metabolic intermediate biosynthesis; acetyl-CoA biosynthesis; acetyl-CoA from acetate: step 1/2. Catalyzes the formation of acetyl phosphate from acetate and ATP. Can also catalyze the reverse reaction. The polypeptide is Acetate kinase (Rickettsia felis (strain ATCC VR-1525 / URRWXCal2) (Rickettsia azadi)).